Consider the following 1374-residue polypeptide: Serine/threonine-protein kinase LMTK1 (1374 aa).

Residues 32-52 (LAVVAVSFSGLFAVIVLMLAC) traverse the membrane as a helical segment. The region spanning 125-395 (LLYLKEIGRG…PTAEEVHLLL (271 aa)) is the Protein kinase domain. Residues 131-139 (IGRGWFGKV) and Lys-156 contribute to the ATP site. Asp-253 serves as the catalytic Proton acceptor. A Phosphoserine modification is found at Ser-495. 5 disordered regions span residues 542 to 622 (GHDP…LAEG), 667 to 731 (VGAR…LLGL), 765 to 1195 (WTET…PAVP), 1245 to 1302 (QESP…AWDD), and 1320 to 1374 (AAPA…SKEA). Residues 606 to 620 (PSRSPSPSAGPLSLA) show a composition bias toward low complexity. The span at 680–690 (SNVSANNNSGS) shows a compositional bias: polar residues. 3 stretches are compositionally biased toward low complexity: residues 719–731 (PEPG…LLGL), 801–831 (SPSQ…TPAT), and 847–856 (SSSSPEVEAP). Residues 865–878 (EATSGIFTDTSSDG) are compositionally biased toward polar residues. Over residues 900-914 (PDSLDSLDIPSSASD) the composition is skewed to low complexity. Polar residues predominate over residues 978–987 (RLSTSLSGLN). Phosphoserine is present on Ser-1029. The segment covering 1063 to 1073 (EGSSPEPSTCP) has biased composition (polar residues). Residues 1138–1155 (TPRAPLRLALPGLPAALE) are compositionally biased toward low complexity. Over residues 1158–1173 (PEEEEEDSEDSDESDE) the composition is skewed to acidic residues. 5 positions are modified to phosphoserine: Ser-1168, Ser-1171, Ser-1184, Ser-1187, and Ser-1262. Positions 1272 to 1291 (GSPSAPNRPQQADGSPNGST) are enriched in polar residues. A compositionally biased stretch (pro residues) spans 1321–1332 (APAPAAPTPTPA). The segment covering 1337 to 1352 (FTVSPAPTSRFSITHV) has biased composition (polar residues). A compositionally biased stretch (basic and acidic residues) spans 1353–1363 (SDSDAESKRGP). Over residues 1365–1374 (AGAGGESKEA) the composition is skewed to gly residues.

This sequence belongs to the protein kinase superfamily. Tyr protein kinase family. In terms of assembly, interacts with CDK5. In terms of processing, autophosphorylated. Phosphorylated by CDK5. As to expression, expressed in brain.

The protein localises to the membrane. It localises to the cytoplasm. Its subcellular location is the perinuclear region. The catalysed reaction is L-seryl-[protein] + ATP = O-phospho-L-seryl-[protein] + ADP + H(+). The enzyme catalyses L-threonyl-[protein] + ATP = O-phospho-L-threonyl-[protein] + ADP + H(+). In terms of biological role, may be involved in neuronal differentiation. This Homo sapiens (Human) protein is Serine/threonine-protein kinase LMTK1 (AATK).